Consider the following 89-residue polypeptide: Large ribosomal subunit protein bL27 (89 aa).

The interval 1–22 (MAHKKAGGSSRNGRDSESKRLG) is disordered.

It belongs to the bacterial ribosomal protein bL27 family.

The polypeptide is Large ribosomal subunit protein bL27 (Bartonella tribocorum (strain CIP 105476 / IBS 506)).